The sequence spans 358 residues: Phosphoribosyl pyrophosphate synthase-associated protein 2 (358 aa).

The protein belongs to the ribose-phosphate pyrophosphokinase family.

Seems to play a negative regulatory role in 5-phosphoribose 1-diphosphate synthesis. This Xenopus tropicalis (Western clawed frog) protein is Phosphoribosyl pyrophosphate synthase-associated protein 2 (prpsap2).